The primary structure comprises 348 residues: Probable dual-specificity RNA methyltransferase RlmN (348 aa).

The active-site Proton acceptor is E93. The Radical SAM core domain occupies 99-323 (TEKRLTACLS…QTRLSNSGIN (225 aa)). The cysteines at positions 106 and 338 are disulfide-linked. Residues C113, C117, and C120 each contribute to the [4Fe-4S] cluster site. S-adenosyl-L-methionine-binding positions include 160–161 (GE), S190, 219–221 (SLH), and N295. C338 acts as the S-methylcysteine intermediate in catalysis.

Belongs to the radical SAM superfamily. RlmN family. [4Fe-4S] cluster is required as a cofactor.

The protein localises to the cytoplasm. It carries out the reaction adenosine(2503) in 23S rRNA + 2 reduced [2Fe-2S]-[ferredoxin] + 2 S-adenosyl-L-methionine = 2-methyladenosine(2503) in 23S rRNA + 5'-deoxyadenosine + L-methionine + 2 oxidized [2Fe-2S]-[ferredoxin] + S-adenosyl-L-homocysteine. The catalysed reaction is adenosine(37) in tRNA + 2 reduced [2Fe-2S]-[ferredoxin] + 2 S-adenosyl-L-methionine = 2-methyladenosine(37) in tRNA + 5'-deoxyadenosine + L-methionine + 2 oxidized [2Fe-2S]-[ferredoxin] + S-adenosyl-L-homocysteine. Functionally, specifically methylates position 2 of adenine 2503 in 23S rRNA and position 2 of adenine 37 in tRNAs. This chain is Probable dual-specificity RNA methyltransferase RlmN, found in Prochlorococcus marinus subsp. pastoris (strain CCMP1986 / NIES-2087 / MED4).